Reading from the N-terminus, the 299-residue chain is Protoheme IX farnesyltransferase (299 aa).

The next 9 membrane-spanning stretches (helical) occupy residues 27 to 47 (VVALMLLTSVVGMSLAPHEHF), 53 to 73 (LIALVGIALMAGSAAAFNHLI), 97 to 117 (FNVLLFALLIGSLGFLSLMLW), 121 to 141 (LTAYLTFASLLGYAVVYTLYL), 149 to 169 (IVIAGIAGAMPPLLGWTSITG), 175 to 195 (AWLLVMIIFIWTPPHFWALAI), 222 to 242 (ILLYAILLALVCMLPVLVGMA), 244 to 264 (YLYLFSALVLNVCFVRYAIKL), and 273 to 293 (AIEMFRFSIYFLLLLFCALLL).

This sequence belongs to the UbiA prenyltransferase family. Protoheme IX farnesyltransferase subfamily.

It is found in the cell inner membrane. The catalysed reaction is heme b + (2E,6E)-farnesyl diphosphate + H2O = Fe(II)-heme o + diphosphate. It functions in the pathway porphyrin-containing compound metabolism; heme O biosynthesis; heme O from protoheme: step 1/1. In terms of biological role, converts heme B (protoheme IX) to heme O by substitution of the vinyl group on carbon 2 of heme B porphyrin ring with a hydroxyethyl farnesyl side group. This chain is Protoheme IX farnesyltransferase, found in Vibrio vulnificus (strain YJ016).